A 333-amino-acid chain; its full sequence is Alpha-N-acetylgalactosaminide alpha-2,6-sialyltransferase 6 (333 aa).

Polar residues predominate over residues 1–12 (MACSRPPSQCEP). The interval 1–26 (MACSRPPSQCEPTSLPPGPPAGRRHL) is disordered. Residues 1-43 (MACSRPPSQCEPTSLPPGPPAGRRHLPLSRRRREMSSNKEQRS) lie on the Cytoplasmic side of the membrane. Residues 44–64 (AVFVILFALITILILYSSNSA) form a helical; Signal-anchor for type II membrane protein membrane-spanning segment. Topologically, residues 65 to 333 (NEVFHYGSLR…GITFSHPSWT (269 aa)) are lumenal. The N-linked (GlcNAc...) asparagine glycan is linked to asparagine 98. An intrachain disulfide couples cysteine 108 to cysteine 256.

Belongs to the glycosyltransferase 29 family. As to expression, expressed in kidney, in proximal tubule epithelial cells. Expressed in colon cell lines.

It localises to the golgi apparatus membrane. It catalyses the reaction a ganglioside GM1b (d18:1(4E)) + CMP-N-acetyl-beta-neuraminate = a ganglioside GD1alpha (d18:1(4E)) + CMP + H(+). It carries out the reaction N-acetyl-alpha-neuraminosyl-(2-&gt;3)-beta-D-galactosyl-(1-&gt;3)-N-acetyl-beta-D-glucosaminyl-(1-&gt;3)-beta-D-galactosyl-(1-&gt;4)-beta-D-glucosyl-(1&lt;-&gt;1')-N-acyl-sphing-4-enine + CMP-N-acetyl-beta-neuraminate = N-acetyl-alpha-neuraminosyl-(2-&gt;3)-beta-D-galactosyl-(1-&gt;3)-[N-acetyl-alpha-neuraminosyl-(2-&gt;6)]-N-acetyl-beta-D-glucosaminyl-(1-&gt;3)-beta-D-galactosyl-(1-&gt;4)-beta-D-glucosyl-(1&lt;-&gt;1')-N-acyl-sphing-4-enine + CMP + H(+). The enzyme catalyses a globoside MSGG + CMP-N-acetyl-beta-neuraminate = a globoside DSGG + CMP + H(+). The catalysed reaction is a ganglioside GD1a (d18:1(4E)) + CMP-N-acetyl-beta-neuraminate = a ganglioside GT1aalpha (d18:1(4E)) + CMP + H(+). It catalyses the reaction a ganglioside GT1b (d18:1(4E)) + CMP-N-acetyl-beta-neuraminate = a ganglioside GQ1balpha (d18:1(4E)) + CMP + H(+). It carries out the reaction 3-O-[alpha-Neu5Ac-(2-&gt;3)-beta-D-Gal-(1-&gt;3)-alpha-D-GalNAc]-L-Ser-[protein] + CMP-N-acetyl-beta-neuraminate = a 3-O-{alpha-Neu5Ac-(2-&gt;3)-beta-D-Gal-(1-&gt;3)-[alpha-Neu5Ac-(2-&gt;6)]-alpha-D-GalNAc}-L-seryl-[protein] + CMP + H(+). The enzyme catalyses 3-O-[alpha-Neu5Ac-(2-&gt;3)-beta-D-Gal-(1-&gt;3)-alpha-D-GalNAc]-L-Thr-[protein] + CMP-N-acetyl-beta-neuraminate = a 3-O-{alpha-Neu5Ac-(2-&gt;3)-beta-D-Gal-(1-&gt;3)-[alpha-Neu5Ac-(2-&gt;6)]-alpha-D-GalNAc}-L-threonyl-[protein] + CMP + H(+). In terms of biological role, transfers the sialyl group (N-acetyl-alpha-neuraminyl or NeuAc) from CMP-NeuAc onto glycoproteins and glycolipids, forming an alpha-2,6-linkage. Produces branched type disialyl structures by transfer of a sialyl group onto the GalNAc or GlcNAc residue inside backbone core chains having a terminal sialic acid with an alpha-2,3-linkage on Gal. ST6GalNAcVI prefers glycolipids to glycoproteins, predominantly catalyzing the biosynthesis of ganglioside GD1alpha from GM1b. Besides GMb1, MSGG and other glycolipids, it shows activity towards sialyl Lc4Cer generating disialyl Lc4Cer, which can lead to the synthesis of disialyl Lewis a (Le(a)), suggested to be a cancer-associated antigen. Also has activity toward GD1a and GT1b, and can generate DSGG (disialylgalactosylgloboside) from MSGG (monosialylgalactosylgloboside). This is Alpha-N-acetylgalactosaminide alpha-2,6-sialyltransferase 6 (ST6GALNAC6) from Homo sapiens (Human).